Consider the following 232-residue polypeptide: Aprataxin-like protein (232 aa).

The region spanning 38–160 (LKVYIESPES…MTLDHVSPSL (123 aa)) is the HIT domain. Interaction with DNA regions lie at residues 63–67 (DMFPK), 138–149 (HAGPSMNNLHLH), and 161–165 (KNSAH). Catalysis depends on His-147, which acts as the Nucleophile. Zn(2+)-binding residues include Cys-200 and Cys-203. The tract at residues 209–212 (RHFT) is interaction with DNA. Positions 217 and 221 each coordinate Zn(2+).

Monomer.

It is found in the nucleus. It localises to the cytoplasm. It catalyses the reaction a 5'-end adenosine-5'-diphospho-5'-2'-deoxyribonucleoside-DNA + H2O = a 5'-end 5'-phospho-2'-deoxyribonucleoside-DNA + AMP + 2 H(+). The catalysed reaction is a 5'-end adenosine-5'-diphospho-5'-ribonucleoside-2'-deoxyribonucleotide-DNA + H2O = a 5'-end 5'-phospho-ribonucleoside-2'-deoxyribonucleotide-DNA + AMP + 2 H(+). It carries out the reaction a 3'-end 2'-deoxyribonucleotide-3'-diphospho-5'-guanosine-DNA + H2O = a 3'-end 2'-deoxyribonucleotide 3'-phosphate-DNA + GMP + 2 H(+). Functionally, DNA-binding protein involved in single-strand DNA break repair, double-strand DNA break repair and base excision repair. Resolves abortive DNA ligation intermediates formed either at base excision sites, or when DNA ligases attempt to repair non-ligatable breaks induced by reactive oxygen species. Catalyzes the release of adenylate groups covalently linked to 5'-phosphate termini, resulting in the production of 5'-phosphate termini that can be efficiently rejoined. Likewise, catalyzes the release of 3'-linked guanosine (DNAppG) and inosine (DNAppI) from DNA, but has higher specific activity with 5'-linked adenosine (AppDNA). This Schizosaccharomyces pombe (strain 972 / ATCC 24843) (Fission yeast) protein is Aprataxin-like protein (hnt3).